We begin with the raw amino-acid sequence, 247 residues long: Uridylate kinase (247 aa).

15–18 (KLSG) lines the ATP pocket. The tract at residues 23-28 (GEEGFG) is involved in allosteric activation by GTP. G57 lines the UMP pocket. The ATP site is built by G58 and R62. UMP is bound by residues D77 and 138 to 145 (TGNPFFTT). Residues T165, Y171, and D174 each contribute to the ATP site.

Belongs to the UMP kinase family. In terms of assembly, homohexamer.

It localises to the cytoplasm. It catalyses the reaction UMP + ATP = UDP + ADP. The protein operates within pyrimidine metabolism; CTP biosynthesis via de novo pathway; UDP from UMP (UMPK route): step 1/1. With respect to regulation, allosterically activated by GTP. Inhibited by UTP. Catalyzes the reversible phosphorylation of UMP to UDP. This Pseudoalteromonas atlantica (strain T6c / ATCC BAA-1087) protein is Uridylate kinase.